The sequence spans 4008 residues: Extracellular matrix organizing protein FRAS1 (4008 aa).

Positions 1-26 (MGVLKVWLGLALALAEFAVLPHHSEG) are cleaved as a signal peptide. VWFC domains lie at 27-88 (ACVY…PECV), 93-153 (GSCH…PVCV), 157-217 (KPCS…PQCS), 219-279 (RSCS…EECV), and 283-343 (GSCS…PECI). Over 27–3901 (ACVYQDSLLA…AASLSQTGAS (3875 aa)) the chain is Extracellular. Ser-344 bears the Phosphoserine mark. The region spanning 347 to 417 (GYCVYEETGE…VKGQCCPDCT (71 aa)) is the VWFC 6 domain. A glycan (N-linked (GlcNAc...) asparagine) is linked at Asn-361. FU repeat units lie at residues 409 to 460 (KGQC…GFYQ), 462 to 505 (GSLC…GFYQ), 507 to 553 (RHSC…GFYN), 555 to 599 (QGTC…GYYA), 602 to 647 (TGRC…GFYS), 649 to 705 (HGVC…HFYL), 708 to 753 (TGIC…GYFH), 755 to 800 (EGSC…EQFL), 803 to 852 (VGYC…GYYA), 854 to 900 (RGAC…GHYL), 903 to 948 (NHVC…QYYL), 952 to 997 (TNTC…SFYQ), 999 to 1042 (SGLC…GYFA), and 1046 to 1089 (KHKC…GFSV). Residue Asn-728 is glycosylated (N-linked (GlcNAc...) asparagine). N-linked (GlcNAc...) asparagine glycans are attached at residues Asn-1093 and Asn-1108. 7 CSPG repeats span residues 1102–1197 (TPSL…LKIS), 1217–1308 (APYV…LQAN), 1329–1438 (GLQL…FEVS), 1463–1559 (APKV…FSFA), 1595–1689 (PVFQ…ISVT), 1710–1810 (GPRL…FSVS), and 1833–1936 (PPVI…FYVS). Asn-1504 carries an N-linked (GlcNAc...) asparagine glycan. A glycan (N-linked (GlcNAc...) asparagine) is linked at Asn-1777. 2 N-linked (GlcNAc...) asparagine glycosylation sites follow: Asn-1948 and Asn-1978. 5 CSPG repeats span residues 1957–2057 (EPPR…FSLT), 2078–2177 (TPHL…FDVV), 2199–2291 (PPVI…FTLS), 2311–2404 (SLPV…FTVS), and 2439–2536 (TPRI…FLVK). 5 consecutive Calx-beta domains span residues 2543–2646 (VSDN…VELS), 2659–2770 (AKVI…IALA), 2784–2890 (AKVL…VFLS), 2905–3007 (IAIN…VYLG), and 3025–3129 (ATIT…LVLG). 3 N-linked (GlcNAc...) asparagine glycosylation sites follow: Asn-2563, Asn-2664, and Asn-2682. 6 N-linked (GlcNAc...) asparagine glycosylation sites follow: Asn-2908, Asn-2985, Asn-3070, Asn-3218, Asn-3676, and Asn-3875. Residues 3902 to 3922 (IGSALAAIMLLLLVFLVACFI) form a helical membrane-spanning segment. Over 3923-4008 (NRKCQKQRKK…HNNLQDGTEV (86 aa)) the chain is Cytoplasmic.

This sequence belongs to the FRAS1 family. Expressed in many adult tissues, with highest levels in kidney, pancreas and thalamus. Relatively high expression was also detected in fetal kidney and heart.

Its subcellular location is the cell membrane. Functionally, involved in extracellular matrix organization. Required for the regulation of epidermal-basement membrane adhesion responsible for proper organogenesis during embryonic development. Involved in brain organization and function. The sequence is that of Extracellular matrix organizing protein FRAS1 from Homo sapiens (Human).